The following is a 222-amino-acid chain: UPF0758 protein TM_1557 (222 aa).

The MPN domain maps to 101-222 (KLDSSVKVYK…YFSFREEGEL (122 aa)). Histidine 171, histidine 173, and aspartate 184 together coordinate Zn(2+). The JAMM motif signature appears at 171–184 (HNHPSGDPTPSKED).

Belongs to the UPF0758 family.

This is UPF0758 protein TM_1557 from Thermotoga maritima (strain ATCC 43589 / DSM 3109 / JCM 10099 / NBRC 100826 / MSB8).